The sequence spans 119 residues: Ribonuclease P protein component (119 aa).

It belongs to the RnpA family. In terms of assembly, consists of a catalytic RNA component (M1 or rnpB) and a protein subunit.

It carries out the reaction Endonucleolytic cleavage of RNA, removing 5'-extranucleotides from tRNA precursor.. Its function is as follows. RNaseP catalyzes the removal of the 5'-leader sequence from pre-tRNA to produce the mature 5'-terminus. It can also cleave other RNA substrates such as 4.5S RNA. The protein component plays an auxiliary but essential role in vivo by binding to the 5'-leader sequence and broadening the substrate specificity of the ribozyme. The sequence is that of Ribonuclease P protein component from Erwinia tasmaniensis (strain DSM 17950 / CFBP 7177 / CIP 109463 / NCPPB 4357 / Et1/99).